Consider the following 351-residue polypeptide: 2-Hydroxyacid oxidase 2 (351 aa).

In terms of domain architecture, FMN hydroxy acid dehydrogenase spans 2–351; it reads SLVCLTDFQA…NRNLVQFSRL (350 aa). FMN is bound by residues 77–79, Ser-106, and Gln-128; that span reads PTG. Tyr-130 lines the a 2-oxocarboxylate pocket. Thr-156 provides a ligand contact to FMN. Residue Arg-165 participates in a 2-oxocarboxylate binding. Position 178 is a phosphothreonine (Thr-178). Residue Lys-222 participates in FMN binding. His-246 acts as the Proton acceptor in catalysis. Arg-249 contacts a 2-oxocarboxylate. FMN is bound by residues 277-281 and 300-301; these read DGGVR and GR. Residues 349–351 carry the Microbody targeting signal motif; sequence SRL.

Belongs to the FMN-dependent alpha-hydroxy acid dehydrogenase family. In terms of assembly, homotetramer. Requires FMN as cofactor. Expressed in the liver and kidney.

It localises to the peroxisome. It catalyses the reaction a (2S)-2-hydroxycarboxylate + O2 = a 2-oxocarboxylate + H2O2. The catalysed reaction is 2-hydroxyhexadecanoate + O2 = 2-oxohexadecanoate + H2O2. It carries out the reaction 2-hydroxyoctanoate + O2 = 2-oxooctanoate + H2O2. Its pathway is lipid metabolism; fatty acid metabolism. In terms of biological role, oxidase that catalyzes the oxidation of medium and long chain hydroxyacids such as 2-hydroxyhexadecanoate and 2-hydroxyoctanoate, to the correspondong 2-oxoacids. Its role in the oxidation of 2-hydroxy fatty acids may contribute to the general pathway of fatty acid alpha-oxidation. Active in vitro with the artificial electron acceptor 2,6-dichlorophenolindophenol (DCIP), but O2 is believed to be the physiological electron acceptor, leading to the production of H2O2. Is not active on glycolate, glyoxylate, L-lactate and 2-hydroxybutanoate. The polypeptide is 2-Hydroxyacid oxidase 2 (HAO2) (Homo sapiens (Human)).